Here is a 293-residue protein sequence, read N- to C-terminus: Probable flavonol synthase 6 (293 aa).

The region spanning 156–253 is the Fe2OG dioxygenase domain; the sequence is KAQYVMRINY…RMSWPILVEP (98 aa). 164–166 provides a ligand contact to 2-oxoglutarate; it reads NYY. The Fe cation site is built by histidine 178, aspartate 180, and histidine 234. 244–246 lines the 2-oxoglutarate pocket; it reads RMS.

It belongs to the iron/ascorbate-dependent oxidoreductase family. Requires Fe(2+) as cofactor.

It carries out the reaction a (2R,3R)-dihydroflavonol + 2-oxoglutarate + O2 = a flavonol + succinate + CO2 + H2O. It participates in secondary metabolite biosynthesis; flavonoid biosynthesis. This is Probable flavonol synthase 6 (FLS6) from Arabidopsis thaliana (Mouse-ear cress).